A 322-amino-acid chain; its full sequence is Transcription factor Atoh8 (322 aa).

3 disordered regions span residues 77–96 (PVPASVAPAVPPGGGTDTAR), 101–144 (IRAP…EAHS), and 159–221 (PPAR…ATAA). Positions 101–111 (IRAPEVSDARK) are enriched in basic and acidic residues. The basic motif; degenerate stretch occupies residues 231–244 (TRRLLANARERTRV). Residues 231–283 (TRRLLANARERTRVHTISAAFEALRKQVPCYSYGQKLSKLAILRIACNYILSL) form the bHLH domain. A helix-loop-helix motif region spans residues 245-283 (HTISAAFEALRKQVPCYSYGQKLSKLAILRIACNYILSL).

Efficient DNA binding requires dimerization with another bHLH protein. Interacts with NEUROG3 and NEUROD1. Interacts with ZFPM2; mediates indirect interaction with GATA4. Forms a heterodimer with TCF3; repress transcription of TCF3 and TCF3/NEUROG3 dimer-induced transactivation of E box-dependent promoters. As to expression, expressed by subsets of mature neurons. Expressed in kidney (podocytes). Expression is restricted to the atria, lung mesenchyme, and vascular smooth muscle.

Its subcellular location is the nucleus. The protein resides in the nucleus speckle. The protein localises to the cytoplasm. Its function is as follows. Transcription factor that binds a palindromic (canonical) core consensus DNA sequence 5'-CANNTG- 3' known as an E-box element, possibly as a heterodimer with other bHLH proteins. Regulates endothelial cell proliferation, migration and tube-like structures formation. Modulates endothelial cell differentiation through NOS3. May be implicated in specification and differentiation of neuronal cell lineages in the brain. May participate in kidney development and may be involved in podocyte differentiation. During early embryonic development is involved in tissue-specific differentiation processes that are dependent on class II bHLH factors and namely modulates the differentiation program initiated by the pro-endocrine factor NEUROG3. During myogenesis, may play a role during the transition of myoblasts from the proliferative phase to the differentiation phase. Positively regulates HAMP transcription in two ways, firstly by acting directly on the HAMP promoter via E-boxes binding and indirectly through increased phosphorylation of SMAD protein complex. Repress NEUROG3-dependent gene activation in a gene-specific manner through at least two mechanisms; requires only either the sequestering of a general partner such as TCF3 through heterodimerization, either also requires binding of the bHLH domain to DNA via a basic motif. This Mus musculus (Mouse) protein is Transcription factor Atoh8.